The primary structure comprises 504 residues: L-carnitine/gamma-butyrobetaine antiporter (504 aa).

Helical transmembrane passes span 10–30 (IEPK…WLTV), 51–71 (WGWA…WLVF), 92–112 (IFMM…SIEI), 143–163 (GPLP…FFFV), 195–215 (FYLV…TPLV), 231–251 (LDAI…ACGL), 263–283 (SYLS…SFIM), 316–336 (WTVF…IFLA), 347–367 (LCFG…TVLG), 398–418 (WAAL…CFIA), 446–466 (LLVR…LLAL), and 475–495 (AIIA…LSFI).

This sequence belongs to the BCCT transporter (TC 2.A.15) family. CaiT subfamily. As to quaternary structure, homotrimer.

It is found in the cell inner membrane. It carries out the reaction 4-(trimethylamino)butanoate(in) + (R)-carnitine(out) = 4-(trimethylamino)butanoate(out) + (R)-carnitine(in). It functions in the pathway amine and polyamine metabolism; carnitine metabolism. Catalyzes the exchange of L-carnitine for gamma-butyrobetaine. This is L-carnitine/gamma-butyrobetaine antiporter from Escherichia coli O8 (strain IAI1).